The chain runs to 505 residues: L-arabinose isomerase (505 aa).

Residues Glu-310, Glu-337, His-354, and His-453 each contribute to the Mn(2+) site.

This sequence belongs to the arabinose isomerase family. The cofactor is Mn(2+).

The enzyme catalyses beta-L-arabinopyranose = L-ribulose. It functions in the pathway carbohydrate degradation; L-arabinose degradation via L-ribulose; D-xylulose 5-phosphate from L-arabinose (bacterial route): step 1/3. Catalyzes the conversion of L-arabinose to L-ribulose. The protein is L-arabinose isomerase of Clavibacter sepedonicus (Clavibacter michiganensis subsp. sepedonicus).